We begin with the raw amino-acid sequence, 629 residues long: tRNA uridine 5-carboxymethylaminomethyl modification enzyme MnmG (629 aa).

Residue 13 to 18 (GGGHAG) coordinates FAD. 273-287 (GPRYCPSIEDKIVRF) lines the NAD(+) pocket.

It belongs to the MnmG family. As to quaternary structure, homodimer. Heterotetramer of two MnmE and two MnmG subunits. Requires FAD as cofactor.

The protein localises to the cytoplasm. In terms of biological role, NAD-binding protein involved in the addition of a carboxymethylaminomethyl (cmnm) group at the wobble position (U34) of certain tRNAs, forming tRNA-cmnm(5)s(2)U34. In Marinomonas sp. (strain MWYL1), this protein is tRNA uridine 5-carboxymethylaminomethyl modification enzyme MnmG.